Consider the following 545-residue polypeptide: Cytosolic Fe-S cluster assembly factor NAR1 (545 aa).

[4Fe-4S] cluster is bound by residues Cys20, Cys72, Cys75, Cys78, Cys186, and Cys241. A disordered region spans residues 401 to 438 (PSTKQTSTVKANPLASRRRARLASKTDGTASSNNATQD). The segment covering 426-438 (TDGTASSNNATQD) has biased composition (polar residues). [4Fe-4S] cluster is bound by residues Cys453 and Cys457.

It belongs to the NARF family.

Its function is as follows. Component of the cytosolic Fe/S protein assembly machinery. Required for maturation of extramitochondrial Fe/S proteins. May play a role in the transfer of pre-assembled Fe/S clusters to target apoproteins. The protein is Cytosolic Fe-S cluster assembly factor NAR1 (NAR1) of Debaryomyces hansenii (strain ATCC 36239 / CBS 767 / BCRC 21394 / JCM 1990 / NBRC 0083 / IGC 2968) (Yeast).